The following is a 117-amino-acid chain: Ribosome-binding factor A (117 aa).

It belongs to the RbfA family. Monomer. Binds 30S ribosomal subunits, but not 50S ribosomal subunits or 70S ribosomes.

Its subcellular location is the cytoplasm. One of several proteins that assist in the late maturation steps of the functional core of the 30S ribosomal subunit. Associates with free 30S ribosomal subunits (but not with 30S subunits that are part of 70S ribosomes or polysomes). Required for efficient processing of 16S rRNA. May interact with the 5'-terminal helix region of 16S rRNA. The polypeptide is Ribosome-binding factor A (Leuconostoc mesenteroides subsp. mesenteroides (strain ATCC 8293 / DSM 20343 / BCRC 11652 / CCM 1803 / JCM 6124 / NCDO 523 / NBRC 100496 / NCIMB 8023 / NCTC 12954 / NRRL B-1118 / 37Y)).